The following is a 207-amino-acid chain: Outer-membrane lipoprotein LolB (207 aa).

The signal sequence occupies residues methionine 1 to alanine 23. Cysteine 24 carries the N-palmitoyl cysteine lipid modification. Residue cysteine 24 is the site of S-diacylglycerol cysteine attachment. Residues proline 171 to proline 207 are disordered.

This sequence belongs to the LolB family. In terms of assembly, monomer.

The protein resides in the cell outer membrane. In terms of biological role, plays a critical role in the incorporation of lipoproteins in the outer membrane after they are released by the LolA protein. The chain is Outer-membrane lipoprotein LolB from Cupriavidus pinatubonensis (strain JMP 134 / LMG 1197) (Cupriavidus necator (strain JMP 134)).